Here is a 432-residue protein sequence, read N- to C-terminus: MPVVVVMGAQWGDEGKGKFVDLLAERAQVVVRSTGGSNAGHTVWAGGRQYKLHQVPSGILYPGTLCVIGHGVVLDPPKLLEEMDRLASQGVDLSSLRISGGAHIVFPFHIRLDEAEEDRKGDRKIGTTRRGIGPAYMDKFARVGIRLVDMLDRDEFLPKLTALVEEKNRILEKVYGLPGFTVEEIAEPYLEYAERLRPYVANTVELVNDAIDAGKNVLFEGAQGHLLDIDFGTYPYVTASHPIAAGAIIGAGVGPTKVSRVVGVVKAYTSRVGEGPFPTELHGEEAHRIREEGHEYGTTTGRPRRIGWLDLVMVRYACRVSGITDLAVPHLDTLAKTGLPTLKVCVGYRMPDGTVTREFPVGLKALSQVEPVYEELPNWEWSAEMSTARQYDELPEGARRYVRLIEDVTGVRVSILGVGSERTQAIYRSAIF.

Residues 12-18 (GDEGKGK) and 40-42 (GHT) contribute to the GTP site. Asp-13 (proton acceptor) is an active-site residue. Residues Asp-13 and Gly-40 each contribute to the Mg(2+) site. Residues 13 to 16 (DEGK), 38 to 41 (NAGH), Thr-128, Arg-142, Gln-223, Thr-238, and Arg-302 contribute to the IMP site. His-41 serves as the catalytic Proton donor. 298-304 (TTTGRPR) is a substrate binding site. Residues Arg-304, 330-332 (HLD), and 417-419 (GVG) contribute to the GTP site.

This sequence belongs to the adenylosuccinate synthetase family. Homodimer. The cofactor is Mg(2+).

The protein resides in the cytoplasm. The catalysed reaction is IMP + L-aspartate + GTP = N(6)-(1,2-dicarboxyethyl)-AMP + GDP + phosphate + 2 H(+). The protein operates within purine metabolism; AMP biosynthesis via de novo pathway; AMP from IMP: step 1/2. In terms of biological role, plays an important role in the de novo pathway of purine nucleotide biosynthesis. Catalyzes the first committed step in the biosynthesis of AMP from IMP. This chain is Adenylosuccinate synthetase, found in Symbiobacterium thermophilum (strain DSM 24528 / JCM 14929 / IAM 14863 / T).